A 156-amino-acid polypeptide reads, in one-letter code: Ribonuclease H (156 aa).

The region spanning 2–144 (SQFDVTVFTD…CDVLARAQAS (143 aa)) is the RNase H type-1 domain. Residues Asp-11, Glu-49, Asp-71, and Asp-136 each contribute to the Mg(2+) site.

This sequence belongs to the RNase H family. As to quaternary structure, monomer. Requires Mg(2+) as cofactor.

Its subcellular location is the cytoplasm. It catalyses the reaction Endonucleolytic cleavage to 5'-phosphomonoester.. Functionally, endonuclease that specifically degrades the RNA of RNA-DNA hybrids. The chain is Ribonuclease H from Nitratidesulfovibrio vulgaris (strain ATCC 29579 / DSM 644 / CCUG 34227 / NCIMB 8303 / VKM B-1760 / Hildenborough) (Desulfovibrio vulgaris).